Here is a 233-residue protein sequence, read N- to C-terminus: DNA repair protein RecO (233 aa).

It belongs to the RecO family.

Involved in DNA repair and RecF pathway recombination. This Pseudomonas paraeruginosa (strain DSM 24068 / PA7) (Pseudomonas aeruginosa (strain PA7)) protein is DNA repair protein RecO.